The chain runs to 131 residues: Large ribosomal subunit protein bL17 (131 aa).

The protein belongs to the bacterial ribosomal protein bL17 family. Part of the 50S ribosomal subunit. Contacts protein L32.

This Thermotoga maritima (strain ATCC 43589 / DSM 3109 / JCM 10099 / NBRC 100826 / MSB8) protein is Large ribosomal subunit protein bL17.